Consider the following 478-residue polypeptide: Sorting nexin-4 (478 aa).

Residues M1 to D10 show a composition bias toward basic and acidic residues. Positions M1–Q56 are disordered. A compositionally biased stretch (low complexity) spans A24–T33. Positions V58 to A180 constitute a PX domain. Positions 101, 103, 127, and 146 each coordinate a 1,2-diacyl-sn-glycero-3-phospho-(1D-myo-inositol-3-phosphate). A disordered region spans residues E459–D478.

The protein belongs to the sorting nexin family. In terms of assembly, interacts with the mitochondrial prohibitin complex subunits PHB1 and PHB2; the interaction is direct and plays a role in mitophagy.

Its subcellular location is the cytoplasm. It localises to the cytosol. It is found in the preautophagosomal structure membrane. The protein resides in the endosome membrane. The protein localises to the mitochondrion membrane. Its subcellular location is the lipid droplet. In terms of biological role, sorting nexin, involved in the separation or division of vacuoles throughout the entire life cycle of the cells. Involved in retrieval of late-Golgi SNAREs from post-Golgi endosomes to the trans-Golgi network, for cytoplasm to vacuole transport (Cvt), and autophagy of large cargos including mitophagy, pexophagy and glycophagy. Required for the switch to necrotrophic growth. This chain is Sorting nexin-4, found in Colletotrichum higginsianum (strain IMI 349063) (Crucifer anthracnose fungus).